Here is a 336-residue protein sequence, read N- to C-terminus: MTANDPSPNHLQLTRDGQLRHFLTLDGLGQPLLTDILDTADSFIEVGERSIKKVPLLRGRTVVNLFFESSTRTRSTFELAAKRLSADVLNLDISTSATSKGESLSDTLLNLEAMASDMFVVRHSQSGAPHFIAESVTPGVAIINAGDGRHAHPTQAMLDMLTIRQHKGRFEGLKVAIVGDVLHSRVARSQIRALNVLGAEEVRVIAPGTLLPRDVEDLGCTVEYDMARGMKDLDVVIMLRLQKERMEGALLPSEREFYRLYGLNQEKLGLAKPDCIVMHPGPINRGVEIESAVADGPQSVILNQVTNGIAIRMAVMSMAMGGQMAERQQRQQEGRA.

Residues R72 and T73 each coordinate carbamoyl phosphate. Position 100 (K100) interacts with L-aspartate. R122, H152, and Q155 together coordinate carbamoyl phosphate. L-aspartate is bound by residues R185 and R240. G281 and P282 together coordinate carbamoyl phosphate.

It belongs to the aspartate/ornithine carbamoyltransferase superfamily. ATCase family. In terms of assembly, heterododecamer (2C3:3R2) of six catalytic PyrB chains organized as two trimers (C3), and six regulatory PyrI chains organized as three dimers (R2).

It carries out the reaction carbamoyl phosphate + L-aspartate = N-carbamoyl-L-aspartate + phosphate + H(+). It functions in the pathway pyrimidine metabolism; UMP biosynthesis via de novo pathway; (S)-dihydroorotate from bicarbonate: step 2/3. Its function is as follows. Catalyzes the condensation of carbamoyl phosphate and aspartate to form carbamoyl aspartate and inorganic phosphate, the committed step in the de novo pyrimidine nucleotide biosynthesis pathway. The chain is Aspartate carbamoyltransferase catalytic subunit from Marinobacter nauticus (strain ATCC 700491 / DSM 11845 / VT8) (Marinobacter aquaeolei).